A 165-amino-acid chain; its full sequence is uncharacterized protein (165 aa).

Residues 15-35 (MSPAIILIGVLILIVLFVIKF) traverse the membrane as a helical segment. A coiled-coil region spans residues 67-119 (ISQLNTLRATLAAKKKELKTLRTARKKECTEQLAKTQAEVDRIQAKIDNFSSR). The segment at 123–156 (VPLPGGEVGPPYNPPPPRTNTRPNPRPNPRPAQL) is disordered. The span at 133–154 (PYNPPPPRTNTRPNPRPNPRPA) shows a compositional bias: pro residues.

The protein resides in the membrane. This is an uncharacterized protein from Acheta domesticus (House cricket).